A 185-amino-acid polypeptide reads, in one-letter code: Peptidyl-tRNA hydrolase (185 aa).

A tRNA-binding site is contributed by Tyr-14. His-19 functions as the Proton acceptor in the catalytic mechanism. The tRNA site is built by Tyr-64, Asn-66, and Asn-112.

This sequence belongs to the PTH family. Monomer.

It localises to the cytoplasm. It carries out the reaction an N-acyl-L-alpha-aminoacyl-tRNA + H2O = an N-acyl-L-amino acid + a tRNA + H(+). In terms of biological role, hydrolyzes ribosome-free peptidyl-tRNAs (with 1 or more amino acids incorporated), which drop off the ribosome during protein synthesis, or as a result of ribosome stalling. Its function is as follows. Catalyzes the release of premature peptidyl moieties from peptidyl-tRNA molecules trapped in stalled 50S ribosomal subunits, and thus maintains levels of free tRNAs and 50S ribosomes. This chain is Peptidyl-tRNA hydrolase, found in Lactobacillus acidophilus (strain ATCC 700396 / NCK56 / N2 / NCFM).